We begin with the raw amino-acid sequence, 572 residues long: Urease subunit alpha (572 aa).

The region spanning 136–572 (GGIDTHIHWI…VPLAQRYFLF (437 aa)) is the Urease domain. Ni(2+) is bound by residues histidine 141, histidine 143, and lysine 224. N6-carboxylysine is present on lysine 224. Histidine 226 contacts substrate. Ni(2+) contacts are provided by histidine 253 and histidine 279. The Proton donor role is filled by histidine 327. Aspartate 367 is a binding site for Ni(2+).

This sequence belongs to the metallo-dependent hydrolases superfamily. Urease alpha subunit family. As to quaternary structure, heterotrimer of UreA (gamma), UreB (beta) and UreC (alpha) subunits. Three heterotrimers associate to form the active enzyme. Ni cation is required as a cofactor. Carboxylation allows a single lysine to coordinate two nickel ions.

It is found in the cytoplasm. It carries out the reaction urea + 2 H2O + H(+) = hydrogencarbonate + 2 NH4(+). It functions in the pathway nitrogen metabolism; urea degradation; CO(2) and NH(3) from urea (urease route): step 1/1. The protein is Urease subunit alpha of Actinobacillus pleuropneumoniae (Haemophilus pleuropneumoniae).